Consider the following 318-residue polypeptide: Mitochondrial thiamine pyrophosphate carrier (318 aa).

Solcar repeat units follow at residues 13–106 (NSKL…LTEL), 116–202 (HQFS…LKRA), and 214–309 (TGNL…FCNL). 5 helical membrane-spanning segments follow: residues 19 to 39 (AVAG…LDVI), 87 to 107 (ILSI…TELL), 122 to 142 (FVCG…VDVL), 173 to 193 (VFYK…GLQF), and 220 to 240 (LLCG…LDLI). The Substrate recognition motif lies at 241–246 (KKRLQV). The helical transmembrane segment at 293 to 313 (ALSTGFMFFWYELFCNLFHCI) threads the bilayer.

The protein belongs to the mitochondrial carrier (TC 2.A.29) family.

It localises to the mitochondrion membrane. The catalysed reaction is thiamine phosphate(out) + thiamine diphosphate(in) = thiamine phosphate(in) + thiamine diphosphate(out). Its function is as follows. Mitochondrial transporter mediating uptake of thiamine diphosphate into mitochondria. It is not clear if the antiporter activity is affected by the membrane potential or by the proton electrochemical gradient. In Mus musculus (Mouse), this protein is Mitochondrial thiamine pyrophosphate carrier (Slc25a19).